Reading from the N-terminus, the 769-residue chain is Dolichyl-phosphate-mannose--protein mannosyltransferase 2 (769 aa).

Residues 1-44 (MSTSVEPNETEALLRKQNDLSTTASIEEKYPHQQGEAAEDDDDT) are disordered. Asparagine 8 carries N-linked (GlcNAc...) asparagine glycosylation. Residues 59–79 (SLKQVESILAPIVFTALSFFV) traverse the membrane as a helical segment. N-linked (GlcNAc...) asparagine glycosylation occurs at asparagine 132. A run of 3 helical transmembrane segments spans residues 152-169 (MRLF…LAYF), 176-194 (FSMF…ESSY), and 200-218 (FILL…VFCF). Residue asparagine 226 is glycosylated (N-linked (GlcNAc...) asparagine). 2 helical membrane-spanning segments follow: residues 252-272 (VKMV…VDLW) and 288-308 (HWFA…MLSF). An N-linked (GlcNAc...) asparagine glycan is attached at asparagine 324. Residues 342 to 397 (PREVSMFHSVITLKNQGLSGGLLHSHVQTFPEGSKQQQVTTYGHKDSNNNWIFQRA) form the MIR 1 domain. Asparagine 408, asparagine 453, and asparagine 462 each carry an N-linked (GlcNAc...) asparagine glycan. MIR domains lie at 412–468 (IEYI…VEIM) and 474–534 (EDKM…IENN). Transmembrane regions (helical) follow at residues 615 to 635 (TTWT…YYLI), 655 to 675 (FLMG…PFAI), 679 to 699 (VTYV…FCYE), and 718 to 738 (LLYL…FWYF).

Belongs to the glycosyltransferase 39 family. PMT1 and PMT2 form a functional heterodimer.

The protein localises to the endoplasmic reticulum membrane. It carries out the reaction a di-trans,poly-cis-dolichyl beta-D-mannosyl phosphate + L-seryl-[protein] = 3-O-(alpha-D-mannosyl)-L-seryl-[protein] + a di-trans,poly-cis-dolichyl phosphate + H(+). The catalysed reaction is a di-trans,poly-cis-dolichyl beta-D-mannosyl phosphate + L-threonyl-[protein] = 3-O-(alpha-D-mannosyl)-L-threonyl-[protein] + a di-trans,poly-cis-dolichyl phosphate + H(+). It functions in the pathway protein modification; protein glycosylation. Functionally, protein mannosyltransferase (PMT) involved in hyphal growth and drug sensitivity. Transfers mannose from Dol-P-mannose to Ser or Thr residues on proteins. PMT1, PMT2 and PMT4 account for most of the protein-O-glycosylation activity, while PMT5 and PMT6 may specifically modulate a much narrower spectrum of target proteins. Essential protein that plays an important role in virulence. This Candida albicans (strain SC5314 / ATCC MYA-2876) (Yeast) protein is Dolichyl-phosphate-mannose--protein mannosyltransferase 2.